We begin with the raw amino-acid sequence, 289 residues long: Nucleotide-binding protein COPRO5265_0725 (289 aa).

Residue 9–16 (GLSGAGKS) participates in ATP binding. Residue 59-62 (DSRS) coordinates GTP.

Belongs to the RapZ-like family.

Functionally, displays ATPase and GTPase activities. The sequence is that of Nucleotide-binding protein COPRO5265_0725 from Coprothermobacter proteolyticus (strain ATCC 35245 / DSM 5265 / OCM 4 / BT).